We begin with the raw amino-acid sequence, 100 residues long: UPF0248 protein APE_0939 (100 aa).

Belongs to the UPF0248 family.

The chain is UPF0248 protein APE_0939 from Aeropyrum pernix (strain ATCC 700893 / DSM 11879 / JCM 9820 / NBRC 100138 / K1).